Reading from the N-terminus, the 340-residue chain is HTH-type transcriptional regulator VirS (340 aa).

Residues 236-334 (ERVVGLARRL…GMTPRQYRAY (99 aa)) enclose the HTH araC/xylS-type domain. 2 DNA-binding regions (H-T-H motif) span residues 254–275 (EAIA…AAEG) and 301–324 (LSQI…RRWF).

In terms of processing, phosphorylated by PknK. Phosphorylation increases affinity for the mymA promoter.

Functionally, regulates the expression of the mymA operon. This is HTH-type transcriptional regulator VirS (virS) from Mycobacterium tuberculosis (strain CDC 1551 / Oshkosh).